Consider the following 1114-residue polypeptide: Hephaestin-like protein (1114 aa).

An N-terminal signal peptide occupies residues 1-26; the sequence is MMDRSNAAFVLTACFIFSQLICHVAA. Plastocyanin-like domains are found at residues 27–210, 218–365, 380–562, 572–719, 730–915, and 924–1114; these read ITRT…LICR, QQSG…VTKC, KRTY…LLTC, TRKD…VNTC, KTRD…LIIC, and TEER…LLKA. At 27-1091 the chain is on the extracellular side; that stretch reads ITRTYYIAAV…KTTPKPITAA (1065 aa). Asparagine 121 carries N-linked (GlcNAc...) asparagine glycosylation. Cu cation-binding residues include histidine 129, histidine 131, histidine 189, and histidine 191. Residues cysteine 183 and cysteine 209 are joined by a disulfide bond. Asparagine 236 carries N-linked (GlcNAc...) asparagine glycosylation. A disulfide bridge links cysteine 284 with cysteine 365. Cu cation contacts are provided by histidine 303, cysteine 346, and histidine 351. N-linked (GlcNAc...) asparagine glycosylation is found at asparagine 361, asparagine 478, and asparagine 489. Disulfide bonds link cysteine 536-cysteine 562 and cysteine 638-cysteine 719. Positions 657, 700, 705, and 710 each coordinate Cu cation. Asparagine 831 carries an N-linked (GlcNAc...) asparagine glycan. Cysteine 889 and cysteine 915 form a disulfide bridge. N-linked (GlcNAc...) asparagine glycosylation occurs at asparagine 944. Residues histidine 1014, histidine 1017, histidine 1019, histidine 1059, cysteine 1060, histidine 1061, histidine 1065, and methionine 1070 each contribute to the Cu cation site. A helical membrane pass occupies residues 1092–1112; sequence SSFVTSSIFIYLSFPVLAMLL. At 1113–1114 the chain is on the cytoplasmic side; sequence KA.

The protein belongs to the multicopper oxidase family. Cu cation is required as a cofactor. As to expression, component of the acid-insoluble and acid-soluble organic matrix of the aragonitic skeleton (at protein level).

The protein localises to the membrane. Functionally, may function as a ferroxidase and may be involved in copper transport and homeostasis. The sequence is that of Hephaestin-like protein from Acropora millepora (Staghorn coral).